A 393-amino-acid polypeptide reads, in one-letter code: N-acyl-phosphatidylethanolamine-hydrolyzing phospholipase D (393 aa).

The residue at position 1 (methionine 1) is an N-acetylmethionine. The span at methionine 1–tyrosine 16 shows a compositional bias: polar residues. The interval methionine 1–serine 40 is disordered. Residues histidine 185 and histidine 187 each coordinate Zn(2+). Residue tyrosine 188 coordinates an N-acyl-1,2-diacyl-sn-glycero-3-phosphoethanolamine. Aspartate 189, histidine 190, and histidine 253 together coordinate Zn(2+). Deoxycholate-binding residues include lysine 256 and methionine 260. Aspartate 284 serves as a coordination point for Zn(2+). An an N-acyl-1,2-diacyl-sn-glycero-3-phosphoethanolamine-binding site is contributed by histidine 321. Histidine 343 serves as a coordination point for Zn(2+). Alanine 348 is a binding site for deoxycholate.

It belongs to the NAPE-PLD family. Homodimer. Bile acids promote the assembly of inactive monomers into an active dimer and enable catalysis. Zn(2+) is required as a cofactor. As to expression, widely expressed. Highest expression in brain, kidney and testis (at protein level). Expressed in adipose tissue (at protein level).

It localises to the golgi apparatus membrane. Its subcellular location is the early endosome membrane. The protein resides in the nucleus envelope. The protein localises to the nucleus. It is found in the nucleoplasm. The catalysed reaction is an N-acyl-1,2-diacyl-sn-glycero-3-phosphoethanolamine + H2O = an N-acylethanolamine + a 1,2-diacyl-sn-glycero-3-phosphate + H(+). The enzyme catalyses N-butanoyl-1-hexadecanoyl-2-(9Z,12Z-octadecadienoyl)-sn-glycero-3-phosphoethanolamine + H2O = N-butanoyl ethanolamine + 1-hexadecanoyl-2-(9Z,12Z-octadecadienoyl)-sn-glycero-3-phosphate + H(+). It carries out the reaction N-hexanoyl-1-hexadecanoyl-2-(9Z,12Z-octadecadienoyl)-sn-glycero-3-phosphoethanolamine + H2O = N-hexanoyl ethanolamine + 1-hexadecanoyl-2-(9Z,12Z-octadecadienoyl)-sn-glycero-3-phosphate + H(+). It catalyses the reaction N-octanoyl-1-hexadecanoyl-2-(9Z,12Z-octadecadienoyl)-sn-glycero-3-phosphoethanolamine + H2O = N-octanoyl ethanolamine + 1-hexadecanoyl-2-(9Z,12Z-octadecadienoyl)-sn-glycero-3-phosphate + H(+). The catalysed reaction is N-decanoyl-1-hexadecanoyl-2-(9Z,12Z-octadecadienoyl)-sn-glycero-3-phosphoethanolamine + H2O = N-decanoyl ethanolamine + 1-hexadecanoyl-2-(9Z,12Z-octadecadienoyl)-sn-glycero-3-phosphate + H(+). The enzyme catalyses N-dodecanoyl-1,2-di-(9Z-octadecenoyl)-sn-glycero-3-phosphoethanolamine + H2O = N-dodecanoylethanolamine + 1,2-di-(9Z-octadecenoyl)-sn-glycero-3-phosphate + H(+). It carries out the reaction N-tetradecanoyl-1,2-di-(9Z-octadecenoyl)-sn-glycero-3-phosphoethanolamine + H2O = N-tetradecanoylethanolamine + 1,2-di-(9Z-octadecenoyl)-sn-glycero-3-phosphate + H(+). It catalyses the reaction N-hexadecanoyl-1,2-di-(9Z-octadecenoyl)-sn-glycero-3-phosphoethanolamine + H2O = N-hexadecanoylethanolamine + 1,2-di-(9Z-octadecenoyl)-sn-glycero-3-phosphate + H(+). The catalysed reaction is N,1-dihexadecanoyl-2-(9Z,12Z-octadecadienoyl)-sn-glycero-3-phosphoethanolamine + H2O = 1-hexadecanoyl-2-(9Z,12Z-octadecadienoyl)-sn-glycero-3-phosphate + N-hexadecanoylethanolamine + H(+). The enzyme catalyses N-octadecanoyl-1,2-di-(9Z-octadecenoyl)-sn-glycero-3-phosphoethanolamine + H2O = N-octadecanoyl ethanolamine + 1,2-di-(9Z-octadecenoyl)-sn-glycero-3-phosphate + H(+). It carries out the reaction N,1,2-tri-(9Z-octadecenoyl)-sn-glycero-3-phosphoethanolamine + H2O = N-(9Z-octadecenoyl) ethanolamine + 1,2-di-(9Z-octadecenoyl)-sn-glycero-3-phosphate + H(+). It catalyses the reaction N-(5Z,8Z,11Z,14Z-eicosatetraenoyl)-1,2-diacyl-sn-glycero-3-phosphoethanolamine + H2O = N-(5Z,8Z,11Z,14Z-eicosatetraenoyl)-ethanolamine + a 1,2-diacyl-sn-glycero-3-phosphate + H(+). The catalysed reaction is N-(5Z,8Z,11Z,14Z-eicosatetraenoyl)-1,2-di-(9Z-octadecenoyl)-sn-glycero-3-phosphoethanolamine + H2O = N-(5Z,8Z,11Z,14Z-eicosatetraenoyl)-ethanolamine + 1,2-di-(9Z-octadecenoyl)-sn-glycero-3-phosphate + H(+). The enzyme catalyses 1-O-(1Z-octadecenoyl)-2-(9Z-octadecenoyl)-sn-glycero-3-phospho-N-hexadecanoyl-ethanolamine + H2O = 1-O-(1Z-octadecenoyl)-2-(9Z-octadecenoyl)-sn-glycero-3-phosphate + N-hexadecanoylethanolamine + H(+). It carries out the reaction N,1-diacyl-sn-glycero-3-phosphoethanolamine + H2O = an N-acylethanolamine + a 1-acyl-sn-glycero-3-phosphate + H(+). It catalyses the reaction N,1-dihexadecanoyl-sn-glycero-3-phosphoethanolamine + H2O = N-hexadecanoylethanolamine + 1-hexadecanoyl-sn-glycero-3-phosphate + H(+). The catalysed reaction is N-(5Z,8Z,11Z,14Z-eicosatetraenoyl)-1-(9Z-octadecenoyl)-sn-glycero-3-phosphoethanolamine + H2O = N-(5Z,8Z,11Z,14Z-eicosatetraenoyl)-ethanolamine + 1-(9Z-octadecenoyl)-sn-glycero-3-phosphate + H(+). With respect to regulation, activated by divalent cations. Activated by bile acids. Its function is as follows. D-type phospholipase that hydrolyzes N-acyl-phosphatidylethanolamines (NAPEs) to produce bioactive N-acylethanolamines/fatty acid ethanolamides (NAEs/FAEs) and phosphatidic acid. Cleaves the terminal phosphodiester bond of diacyl- and alkenylacyl-NAPEs, primarily playing a role in the generation of long-chain saturated and monounsaturated NAEs in the brain. May control NAPE homeostasis in dopaminergic neuron membranes and regulate neuron survival, partly through RAC1 activation. As a regulator of lipid metabolism in the adipose tissue, mediates the crosstalk between adipocytes, gut microbiota and immune cells to control body temperature and weight. In particular, regulates energy homeostasis by promoting cold-induced brown or beige adipocyte differentiation program to generate heat from fatty acids and glucose. Has limited D-type phospholipase activity toward N-acyl lyso-NAPEs. In Pongo abelii (Sumatran orangutan), this protein is N-acyl-phosphatidylethanolamine-hydrolyzing phospholipase D (NAPEPLD).